A 195-amino-acid chain; its full sequence is Imidazole glycerol phosphate synthase subunit HisH (195 aa).

The region spanning 1–193 (MIAIVDYGVG…RETTCNSTQQ (193 aa)) is the Glutamine amidotransferase type-1 domain. The active-site Nucleophile is C78. Residues H168 and E170 contribute to the active site.

Heterodimer of HisH and HisF.

It localises to the cytoplasm. It catalyses the reaction 5-[(5-phospho-1-deoxy-D-ribulos-1-ylimino)methylamino]-1-(5-phospho-beta-D-ribosyl)imidazole-4-carboxamide + L-glutamine = D-erythro-1-(imidazol-4-yl)glycerol 3-phosphate + 5-amino-1-(5-phospho-beta-D-ribosyl)imidazole-4-carboxamide + L-glutamate + H(+). It carries out the reaction L-glutamine + H2O = L-glutamate + NH4(+). Its pathway is amino-acid biosynthesis; L-histidine biosynthesis; L-histidine from 5-phospho-alpha-D-ribose 1-diphosphate: step 5/9. IGPS catalyzes the conversion of PRFAR and glutamine to IGP, AICAR and glutamate. The HisH subunit catalyzes the hydrolysis of glutamine to glutamate and ammonia as part of the synthesis of IGP and AICAR. The resulting ammonia molecule is channeled to the active site of HisF. The polypeptide is Imidazole glycerol phosphate synthase subunit HisH (Exiguobacterium sibiricum (strain DSM 17290 / CCUG 55495 / CIP 109462 / JCM 13490 / 255-15)).